A 1156-amino-acid chain; its full sequence is Protein hu-li tai shao (1156 aa).

A disordered region spans residues 1-36 (MTEVEQPPQNGIDPTAGEDDDNSKARPADIEQDMRE). Residues 22–36 (NSKARPADIEQDMRE) show a composition bias toward basic and acidic residues. Phosphoserine is present on Ser478. 2 positions are modified to phosphothreonine: Thr480 and Thr498. Ser603 is subject to Phosphoserine. Residue Tyr608 is modified to Phosphotyrosine. Thr609 and Thr611 each carry phosphothreonine. Ser614 is subject to Phosphoserine. Residue Tyr627 is modified to Phosphotyrosine. Phosphoserine is present on Ser630. A disordered region spans residues 897–956 (FLPSNHALPKDTDANNRDQTDRERPEAEQEESFHCAGDSGIGDSTGRRPRLATTSNDSSI). Residues 904-929 (LPKDTDANNRDQTDRERPEAEQEESF) are compositionally biased toward basic and acidic residues.

The protein belongs to the aldolase class II family. Adducin subfamily. Isoform C is expressed in nurse cells. Isoform A is produced in the nurse cell but transported into the oocyte at stage 1, localizes to the oocyte cortex at stage 8 and to the anterior pole from day 9 onwards. Isoform B is expressed in the somatic follicle cells that surround the germline.

The protein localises to the cytoplasm. It localises to the cytoskeleton. The protein resides in the cell membrane. In terms of biological role, required for assembling actin at ring canals in developing egg chambers. Probably interacts with other developmental proteins involved in nurse cell/oocyte transport through the ring canals. Important for normal neuromotor function. This chain is Protein hu-li tai shao (hts), found in Drosophila melanogaster (Fruit fly).